The sequence spans 557 residues: Formate--tetrahydrofolate ligase (557 aa).

65-72 provides a ligand contact to ATP; the sequence is TPAGEGKT.

It belongs to the formate--tetrahydrofolate ligase family.

It catalyses the reaction (6S)-5,6,7,8-tetrahydrofolate + formate + ATP = (6R)-10-formyltetrahydrofolate + ADP + phosphate. It participates in one-carbon metabolism; tetrahydrofolate interconversion. This is Formate--tetrahydrofolate ligase from Acidiphilium cryptum (strain JF-5).